We begin with the raw amino-acid sequence, 207 residues long: Mediator of RNA polymerase II transcription subunit 21 (207 aa).

A disordered region spans residues 36–120; sequence IPPPDVPDAA…APDSPRTFAS (85 aa). Residues 91–108 show a composition bias toward low complexity; it reads GEGAQTPGPAAGAGADPN. Residues 146 to 194 are a coiled coil; it reads IDSSEAEQEKRIRELEGELRQVEEERELKMRELKRLRRTLENVLTAVET.

Belongs to the Mediator complex subunit 21 family. In terms of assembly, component of the Mediator complex.

The protein localises to the nucleus. Functionally, component of the Mediator complex, a coactivator involved in the regulated transcription of nearly all RNA polymerase II-dependent genes. Mediator functions as a bridge to convey information from gene-specific regulatory proteins to the basal RNA polymerase II transcription machinery. Mediator is recruited to promoters by direct interactions with regulatory proteins and serves as a scaffold for the assembly of a functional preinitiation complex with RNA polymerase II and the general transcription factors. The polypeptide is Mediator of RNA polymerase II transcription subunit 21 (srb7) (Aspergillus fumigatus (strain ATCC MYA-4609 / CBS 101355 / FGSC A1100 / Af293) (Neosartorya fumigata)).